Consider the following 708-residue polypeptide: Capsid scaffolding protein (708 aa).

Catalysis depends on charge relay system residues histidine 63, serine 132, and histidine 157. 3 disordered regions span residues 269 to 339, 455 to 565, and 593 to 619; these read ASAE…MSHP, HPSY…QQQR, and ALPS…SGGG. A compositionally biased stretch (low complexity) spans 284 to 293; sequence PAAGARVPSS. The span at 294–311 shows a compositional bias: pro residues; that stretch reads SPSPPVEPPSPVQPPALP. The span at 326–339 shows a compositional bias: low complexity; it reads SPSEPAEAASMSHP. The tract at residues 333–352 is interaction with pAP; sequence AASMSHPLSAAVPAATAPPG. Over residues 498–513 the composition is skewed to basic residues; the sequence is KQHRHGGSGGHNKRRK. Short sequence motifs (nuclear localization signal) lie at residues 510 to 515 and 537 to 543; these read KRRKET and RARKRLK. Positions 593-611 are enriched in low complexity; the sequence is ALPSAASSSPTTTTVCTPT. The interaction with major capsid protein stretch occupies residues 688-708; it reads PPKDMVDLNRRIFVAALNKLE.

The protein belongs to the herpesviridae capsid scaffolding protein family. In terms of assembly, homomultimer. Interacts with major capsid protein. As to quaternary structure, exists in a monomer-dimer equilibrium with the dimer being the active species. In terms of processing, capsid scaffolding protein is cleaved by assemblin after formation of the spherical procapsid. As a result, the capsid obtains its mature, icosahedral shape. Cleavages occur at two or more sites: release (R-site) and maturation (M-site).

Its subcellular location is the host cytoplasm. It is found in the host nucleus. It carries out the reaction Cleaves -Ala-|-Ser- and -Ala-|-Ala- bonds in the scaffold protein.. In terms of biological role, acts as a scaffold protein by binding major capsid protein in the cytoplasm, inducing the nuclear localization of both proteins. Multimerizes in the nucleus such as major capsid protein forms the icosahedral T=16 capsid. Autocatalytic cleavage releases the assembly protein, and subsequently abolishes interaction with major capsid protein. Cleavages products are evicted from the capsid before or during DNA packaging. Functionally, protease that plays an essential role in virion assembly within the nucleus. Catalyzes the cleavage of the assembly protein after formation of the spherical procapsid. By that cleavage, the capsid matures and gains its icosahedral shape. The cleavage sites seem to include -Ala-Ser-, -Ala-Ala-, as well as Ala-Thr bonds. Assemblin and cleavages products are evicted from the capsid before or during DNA packaging. Its function is as follows. Plays a major role in capsid assembly. Acts as a scaffold protein by binding major capsid protein. Multimerizes in the nucleus such as major capsid protein forms the icosahedral T=16 capsid. Cleaved by assemblin after capsid completion. The cleavages products are evicted from the capsid before or during DNA packaging. The polypeptide is Capsid scaffolding protein (UL80) (Homo sapiens (Human)).